Here is a 351-residue protein sequence, read N- to C-terminus: Translation initiation factor eIF2B subunit beta (351 aa).

The protein belongs to the eIF-2B alpha/beta/delta subunits family. Component of the translation initiation factor 2B (eIF2B) complex which is a heterodecamer of two sets of five different subunits: alpha, beta, gamma, delta and epsilon. Subunits alpha, beta and delta comprise a regulatory subcomplex and subunits epsilon and gamma comprise a catalytic subcomplex. Within the complex, the hexameric regulatory complex resides at the center, with the two heterodimeric catalytic subcomplexes bound on opposite sides.

Its subcellular location is the cytoplasm. It is found in the cytosol. Its activity is regulated as follows. Activated by the chemical integrated stress response (ISR) inhibitor ISRIB which stimulates guanine nucleotide exchange factor activity for both phosphorylated and unphosphorylated eIF2. Functionally, acts as a component of the translation initiation factor 2B (eIF2B) complex, which catalyzes the exchange of GDP for GTP on eukaryotic initiation factor 2 (eIF2) gamma subunit. Its guanine nucleotide exchange factor activity is repressed when bound to eIF2 complex phosphorylated on the alpha subunit, thereby limiting the amount of methionyl-initiator methionine tRNA available to the ribosome and consequently global translation is repressed. The sequence is that of Translation initiation factor eIF2B subunit beta (EIF2B2) from Oryctolagus cuniculus (Rabbit).